The sequence spans 344 residues: Uroporphyrinogen decarboxylase (344 aa).

Substrate contacts are provided by residues 26 to 30 (RQAGR), F45, D75, Y151, S206, and H320.

Belongs to the uroporphyrinogen decarboxylase family. Homodimer.

It localises to the cytoplasm. It catalyses the reaction uroporphyrinogen III + 4 H(+) = coproporphyrinogen III + 4 CO2. It participates in porphyrin-containing compound metabolism; protoporphyrin-IX biosynthesis; coproporphyrinogen-III from 5-aminolevulinate: step 4/4. Catalyzes the decarboxylation of four acetate groups of uroporphyrinogen-III to yield coproporphyrinogen-III. The chain is Uroporphyrinogen decarboxylase from Staphylococcus epidermidis (strain ATCC 35984 / DSM 28319 / BCRC 17069 / CCUG 31568 / BM 3577 / RP62A).